Here is a 301-residue protein sequence, read N- to C-terminus: NTE family protein RssA (301 aa).

Positions 8–168 (LALGSGAARG…VNPIPISLTR (161 aa)) constitute a PNPLA domain. Residues 39 to 43 (GCSIG) carry the GXSXG motif. Ser41 serves as the catalytic Nucleophile. Asp155 serves as the catalytic Proton acceptor. The DGA/G motif lies at 155 to 157 (DGA).

Belongs to the NTE family.

This Escherichia coli (strain K12) protein is NTE family protein RssA (rssA).